Here is a 494-residue protein sequence, read N- to C-terminus: Glutamyl-tRNA(Gln) amidotransferase subunit A (494 aa).

Catalysis depends on charge relay system residues K72 and S147. The active-site Acyl-ester intermediate is the S171.

This sequence belongs to the amidase family. GatA subfamily. In terms of assembly, heterotrimer of A, B and C subunits.

The catalysed reaction is L-glutamyl-tRNA(Gln) + L-glutamine + ATP + H2O = L-glutaminyl-tRNA(Gln) + L-glutamate + ADP + phosphate + H(+). Its function is as follows. Allows the formation of correctly charged Gln-tRNA(Gln) through the transamidation of misacylated Glu-tRNA(Gln) in organisms which lack glutaminyl-tRNA synthetase. The reaction takes place in the presence of glutamine and ATP through an activated gamma-phospho-Glu-tRNA(Gln). The chain is Glutamyl-tRNA(Gln) amidotransferase subunit A from Methylacidiphilum infernorum (isolate V4) (Methylokorus infernorum (strain V4)).